The following is a 170-amino-acid chain: MSAKSKQYFNIFVFIISLIFFDQLSKYLVAKYVKLGSIYFSFFDDFFRIIHVRNTGILFSMGSNIHYSLKKIFFLAMPIFILIFVFYLSLKERNCIARISLLLIFSGGVGNVIDRLFRPSGVVDFLDLKFYGIFGLDRWPTFNFADSYVVIGMILFLVYDFFIKRKVLNK.

Helical transmembrane passes span 9–29 (FNIFVFIISLIFFDQLSKYLV), 72–92 (IFFLAMPIFILIFVFYLSLKE), and 94–114 (NCIARISLLLIFSGGVGNVID). Active-site residues include Asp-124 and Asp-146. A helical membrane pass occupies residues 143–163 (NFADSYVVIGMILFLVYDFFI).

It belongs to the peptidase A8 family.

The protein localises to the cell inner membrane. The enzyme catalyses Release of signal peptides from bacterial membrane prolipoproteins. Hydrolyzes -Xaa-Yaa-Zaa-|-(S,diacylglyceryl)Cys-, in which Xaa is hydrophobic (preferably Leu), and Yaa (Ala or Ser) and Zaa (Gly or Ala) have small, neutral side chains.. It participates in protein modification; lipoprotein biosynthesis (signal peptide cleavage). Functionally, this protein specifically catalyzes the removal of signal peptides from prolipoproteins. The protein is Lipoprotein signal peptidase of Borreliella burgdorferi (strain ATCC 35210 / DSM 4680 / CIP 102532 / B31) (Borrelia burgdorferi).